Here is a 421-residue protein sequence, read N- to C-terminus: Serine hydroxymethyltransferase (421 aa).

(6S)-5,6,7,8-tetrahydrofolate-binding positions include leucine 121 and 125–127 (GHL). Lysine 230 is modified (N6-(pyridoxal phosphate)lysine). 355–357 (SPF) is a binding site for (6S)-5,6,7,8-tetrahydrofolate.

This sequence belongs to the SHMT family. In terms of assembly, homodimer. Requires pyridoxal 5'-phosphate as cofactor.

Its subcellular location is the cytoplasm. The catalysed reaction is (6R)-5,10-methylene-5,6,7,8-tetrahydrofolate + glycine + H2O = (6S)-5,6,7,8-tetrahydrofolate + L-serine. It participates in one-carbon metabolism; tetrahydrofolate interconversion. Its pathway is amino-acid biosynthesis; glycine biosynthesis; glycine from L-serine: step 1/1. Catalyzes the reversible interconversion of serine and glycine with tetrahydrofolate (THF) serving as the one-carbon carrier. This reaction serves as the major source of one-carbon groups required for the biosynthesis of purines, thymidylate, methionine, and other important biomolecules. Also exhibits THF-independent aldolase activity toward beta-hydroxyamino acids, producing glycine and aldehydes, via a retro-aldol mechanism. In Psychromonas ingrahamii (strain DSM 17664 / CCUG 51855 / 37), this protein is Serine hydroxymethyltransferase.